The primary structure comprises 723 residues: Transcription factor E2F7 (723 aa).

The tract at residues 121–146 (AEEEEEEELDDSCQYEALDESERRPS) is disordered. The segment covering 122 to 139 (EEEEEEELDDSCQYEALD) has biased composition (acidic residues). 2 consecutive DNA-binding regions follow at residues 147–216 (RKQK…VWHG) and 264–349 (RKDK…KWIG). Composition is skewed to polar residues over residues 356–370 (SSNSDDLRGQISNSG) and 395–405 (LISSAPSTPHR). Disordered regions lie at residues 356–379 (SSNSDDLRGQISNSGTERREKMAR), 395–417 (LISSAPSTPHRYSTDEPVDYSRK), 489–546 (SLRK…ASFG), 650–689 (EHHGNVPATTSSPRAEESPKPAQTQTPVTPKEASLGSKSF), and 702–723 (QSAARKRGSAQRRLDIGHTAAN). Positions 494–503 (ERSEEDDHQT) are enriched in basic and acidic residues. The span at 520-535 (SESLSSSTRRSPVCSP) shows a compositional bias: low complexity.

The protein belongs to the E2F/DP family. In terms of assembly, homodimer and heterodimer: mainly forms homodimers and, to a lesser extent, heterodimers with e2f8.

The protein resides in the nucleus. Its function is as follows. Atypical E2F transcription factor that participates in various processes such as angiogenesis and polyploidization of specialized cells. Mainly acts as a transcription repressor that binds DNA independently of DP proteins and specifically recognizes the E2 recognition site 5'-TTTC[CG]CGC-3'. Directly represses transcription of classical E2F transcription factors such as e2f1. Acts as a regulator of S-phase by recognizing and binding the E2-related site 5'-TTCCCGCC-3' and mediating repression of G1/S-regulated genes. Acts as a promoter of sprouting angiogenesis, possibly by acting as a transcription activator and promoting expression of vegfa. This Danio rerio (Zebrafish) protein is Transcription factor E2F7 (e2f7).